The following is a 237-amino-acid chain: Ubiquinone biosynthesis O-methyltransferase (237 aa).

Arg38, Gly58, Asp79, and Met124 together coordinate S-adenosyl-L-methionine.

This sequence belongs to the methyltransferase superfamily. UbiG/COQ3 family.

It catalyses the reaction a 3-demethylubiquinol + S-adenosyl-L-methionine = a ubiquinol + S-adenosyl-L-homocysteine + H(+). The enzyme catalyses a 3-(all-trans-polyprenyl)benzene-1,2-diol + S-adenosyl-L-methionine = a 2-methoxy-6-(all-trans-polyprenyl)phenol + S-adenosyl-L-homocysteine + H(+). The protein operates within cofactor biosynthesis; ubiquinone biosynthesis. Functionally, O-methyltransferase that catalyzes the 2 O-methylation steps in the ubiquinone biosynthetic pathway. This Acinetobacter baumannii (strain SDF) protein is Ubiquinone biosynthesis O-methyltransferase.